The sequence spans 132 residues: D-ribose pyranase (132 aa).

Histidine 20 (proton donor) is an active-site residue. Substrate contacts are provided by residues aspartate 28, histidine 99, and 121 to 123 (YAN).

The protein belongs to the RbsD / FucU family. RbsD subfamily. As to quaternary structure, homodecamer.

The protein resides in the cytoplasm. It catalyses the reaction beta-D-ribopyranose = beta-D-ribofuranose. The protein operates within carbohydrate metabolism; D-ribose degradation; D-ribose 5-phosphate from beta-D-ribopyranose: step 1/2. Functionally, catalyzes the interconversion of beta-pyran and beta-furan forms of D-ribose. The sequence is that of D-ribose pyranase from Chromobacterium violaceum (strain ATCC 12472 / DSM 30191 / JCM 1249 / CCUG 213 / NBRC 12614 / NCIMB 9131 / NCTC 9757 / MK).